Consider the following 572-residue polypeptide: NADP-dependent malic enzyme (572 aa).

The residue at position 1 (methionine 1) is an N-acetylmethionine. The active-site Proton donor is the tyrosine 102. Arginine 155 is a binding site for NADP(+). Catalysis depends on lysine 173, which acts as the Proton acceptor. A divalent metal cation contacts are provided by glutamate 245, aspartate 246, and aspartate 269. Residues aspartate 269 and 301–318 (GAGEAALGIAHLIVMAME) each bind NADP(+). Residue serine 336 is modified to Phosphoserine. Asparagine 408 is an NADP(+) binding site.

This sequence belongs to the malic enzymes family. In terms of assembly, homotetramer. The cofactor is Mg(2+). Mn(2+) is required as a cofactor. In terms of tissue distribution, ubiquitous. Up-regulated by 3,5,3'-triiodo-L-thyronine in the liver, kidney and heart.

The protein localises to the cytoplasm. It carries out the reaction (S)-malate + NADP(+) = pyruvate + CO2 + NADPH. The enzyme catalyses oxaloacetate + H(+) = pyruvate + CO2. In terms of biological role, catalyzes the oxidative decarboxylation of (S)-malate in the presence of NADP(+) and divalent metal ions, and decarboxylation of oxaloacetate. The protein is NADP-dependent malic enzyme (Me1) of Rattus norvegicus (Rat).